The sequence spans 175 residues: Thioredoxin-like protein CITRX, chloroplastic (175 aa).

Residues 1 to 73 (MQAASLAFHP…REDYLVKKLS (73 aa)) constitute a chloroplast transit peptide. The Thioredoxin domain occupies 74–175 (AKEIQELIKG…MMRDIINNDL (102 aa)). Residues cysteine 98 and cysteine 101 each act as nucleophile in the active site. A disulfide bond links cysteine 98 and cysteine 101.

Belongs to the thioredoxin family. Plant CITRX-type subfamily.

It localises to the plastid. Its subcellular location is the chloroplast. In terms of biological role, probable thiol-disulfide oxidoreductase that may play a role in proper chloroplast development. The chain is Thioredoxin-like protein CITRX, chloroplastic from Solanum tuberosum (Potato).